Consider the following 1750-residue polypeptide: MASTEVDSRLGRVVIPALDKVIKNASWRKHSKLAHECKSVIERLRSPENSSPVADSESGSSIPGPLHDGGAAEYSLAESEIILSPLINASSTGVLKIVDPAVDCIQKLIAHGYVRGEADPTGGPEALLLSKLIETICKCHELDDEGLELLVLKTLLTAVTSISLRIHGDSLLQIVRTCYGIYLGSRNVVNQATAKASLVQMSVIVFRRMEADSSTVPIQPIVVAELMEPMDKSESDPSTTQSVQGFITKIMQDIDGVFNSANAKGTFGGHDGAFETSLPGTANPTDLLDSTDKDMLDAKYWEISMYKSALEGRKGELADGEVEKDDDSEVQIGNKLRRDAFLVFRALCKLSMKTPPKEDPELMRGKIVALELLKILLENAGAVFRTSDRFLGAIKQYLCLSLLKNSASNLMIIFQLSCSILLSLVSRFRAGLKAEIGVFFPMIVLRVLENVAQPDFQQKMIVLRFLDKLCVDSQILVDIFINYDCDVNSSNIFERMVNGLLKTAQGVPPGTVTTLLPPQEAAMKLEAMKCLVAVLRSMGDWVNKQLRLPDPYSAKMLEIVDRNLEEGSHPVENGKGDGGHGGFERSDSQSELSSGNSDALAIEQRRAYKLELQEGISIFNQKPKKGIEFLIKANKVGDSPEEIAAFLKDASGLNKTLIGDYLGEREDLSLKVMHAYVDSFEFQGMEFDEAIRAFLRGFRLPGEAQKIDRIMEKFAERFCKCNPKDFSSADTAYVLAYSVILLNTDAHNPMVKSKMTADGFIRNNRGIDDGKDLPEEYLRALYERISRNEIKMKDDGLGPQQKQPTNSSRLLGLDTILNIVVPRRGDDMNMETSDDLIRHMQERFKEKARKSESVYYAASDVIILRFMVEVCWAPMLAAFSVPLDQSDDAVITTLCLEGFHHAIHVTSVMSLKTHRDAFVTSLAKFTSLHSPADIKQKNIEAIKAIVKLAEEEGNYLQDAWEHILTCVSRFEHLHLLGEGAPPDATFFAFPQTESGNSPLAKPNSVPAIKERAPGKLQYAASAMIRGSYDGSGVAGKASNTVTSEQMNNLISNLNLLEQVGDMSRIFTRSQRLNSEAIIDFVKALCKVSMDELRSPSDPRVFSLTKIVEIAHYNMNRIRLVWSSIWHVLSDFFVTIGCSDNLSIAIFAMDSLRQLSMKFLEREELANYNFQNEFMKPFVVVMRKSGAVEIRELIIRCVSQMVLSRVDNVKSGWKSMFMIFTTAAHDAHKNIVFLSFEMVEKIIRDYFPHITETETTTFTDCVNCLVAFTNCKFEKDISLQAIAFLQYCARKLAEGYVGSSLRRNPPLSPQGGKIGKQDSGKFLESDEHLYSWFPLLAGLSELSFDPRAEIRKVALKVLFDTLRNHGDHFSLALWERVFESVLFRIFDYVRQDVDPSEDDSTDQRGYNGEVDQESWLYETCSLALQLVVDLFVNFYKTVNPLLKKVLMLFVSLIKRPHQSLAGAGIAALVRLMRDVGHQFSNEQWLEVVSCIKEAADATSPDFSYVTSEDLMEDVSNEDETNDNSNDALRRRNRQLHAVVTDAKSKASIQIFVIQAVTDIYDMYRMSLTANHMLMLFDAMHGIGSNAHKINADLLLRSKLQELGSSLESQEAPLLRLENESFQTCMTFLDNLISDQPVGYNEAEIESHLISLCREVLEFYINISCSKEQSSRWAVPSGSGKKKELTARAPLVVAAIQTLGNMGESLFKKNLPELFPLIATLISCEHGSGEVQVALSDMLQTSMGPVLLRSCC.

N-acetylalanine is present on alanine 2. Disordered regions lie at residues 44-65 (LRSP…IPGP) and 565-596 (EEGS…SSGN). Polar residues predominate over residues 47–61 (PENSSPVADSESGSS). A compositionally biased stretch (basic and acidic residues) spans 565 to 588 (EEGSHPVENGKGDGGHGGFERSDS). A Phosphoserine modification is found at serine 586. In terms of domain architecture, SEC7 spans 601–788 (AIEQRRAYKL…RALYERISRN (188 aa)). Residue glutamate 703 is part of the active site. The residue at position 1307 (serine 1307) is a Phosphoserine.

In terms of assembly, homodimer.

Its subcellular location is the cytoplasm. It is found in the cytosol. The protein localises to the membrane. Inhibited by brefeldin A. In terms of biological role, activates the ARF proteins by exchanging bound GDP for free GTP. Plays a role in vesicular protein sorting. Involved both in the nuclear division phase and in the nuclear fusion phase. In Arabidopsis thaliana (Mouse-ear cress), this protein is Brefeldin A-inhibited guanine nucleotide-exchange protein 3 (BIG3).